Here is a 420-residue protein sequence, read N- to C-terminus: MSTPIEAAWQLAKTRYAGLNIDVEAALKQLDQIPVSMHCWQGDDVAGFENTGGPLTGGIQATGNYPGKASTPDELRADLEQAFALIPGPKRLNLHAIYLESAQPVARNEIAPEHFSNWVAWAKRHQLGLDFNPTCFSHPLSADGFTLSHPDEKVRRFWIEHCQASRRISAYFGRELGTPSVMNIWVPDGMKDLTIDRLAFRQRLLSALDEVIAEPLDQTHHIDAVESKLFGIGAESFTVGSSEFCLGYAASRGTALCLDAGHFHPTEVISDKISSAILYVPRLLLHVSRPVRWDSDHVVLLDDETQAIAHEIIRHQLLNRVHIGLDFFDASINRIAAWVIGTRNMKKALLRALLEPTETLRKLEQNGDYTARLALLEEQKSLPWQAVWEHYCQRHDVIPGSEWLQQVRQYEETILTQRQG.

Histidine 262, aspartate 294, and aspartate 296 together coordinate Mn(2+).

It belongs to the rhamnose isomerase family. As to quaternary structure, homotetramer. It depends on Mn(2+) as a cofactor.

It localises to the cytoplasm. It carries out the reaction L-rhamnopyranose = L-rhamnulose. It participates in carbohydrate degradation; L-rhamnose degradation; glycerone phosphate from L-rhamnose: step 1/3. Functionally, catalyzes the interconversion of L-rhamnose and L-rhamnulose. The polypeptide is L-rhamnose isomerase (Pectobacterium atrosepticum (strain SCRI 1043 / ATCC BAA-672) (Erwinia carotovora subsp. atroseptica)).